The following is a 763-amino-acid chain: Phosphoglycerol transferase I (763 aa).

4 helical membrane-spanning segments follow: residues 1-21 (MSELLSFALFLASVLIYAWKA), 26-46 (WWFAATLTVLGLFVVLNITLF), 77-97 (ILPGIGIVLGLTAVFGALGWI), and 108-128 (FGYSLLALLLALGSVDASPAF).

Belongs to the OpgB family.

The protein localises to the cell inner membrane. It catalyses the reaction a phosphatidylglycerol + a membrane-derived-oligosaccharide D-glucose = a 1,2-diacyl-sn-glycerol + a membrane-derived-oligosaccharide 6-(glycerophospho)-D-glucose.. The protein operates within glycan metabolism; osmoregulated periplasmic glucan (OPG) biosynthesis. Transfers a phosphoglycerol residue from phosphatidylglycerol to the membrane-bound nascent glucan backbones. The chain is Phosphoglycerol transferase I from Escherichia coli (strain SE11).